A 200-amino-acid chain; its full sequence is Peptidyl-tRNA hydrolase (200 aa).

A tRNA-binding site is contributed by Tyr14. His19 serves as the catalytic Proton acceptor. TRNA is bound by residues Phe64, Asn66, and Asn112.

The protein belongs to the PTH family. In terms of assembly, monomer.

It is found in the cytoplasm. The catalysed reaction is an N-acyl-L-alpha-aminoacyl-tRNA + H2O = an N-acyl-L-amino acid + a tRNA + H(+). Its function is as follows. Hydrolyzes ribosome-free peptidyl-tRNAs (with 1 or more amino acids incorporated), which drop off the ribosome during protein synthesis, or as a result of ribosome stalling. In terms of biological role, catalyzes the release of premature peptidyl moieties from peptidyl-tRNA molecules trapped in stalled 50S ribosomal subunits, and thus maintains levels of free tRNAs and 50S ribosomes. The polypeptide is Peptidyl-tRNA hydrolase (Maricaulis maris (strain MCS10) (Caulobacter maris)).